The following is a 514-amino-acid chain: Cytochrome P450 monooxygenase FUS8 (514 aa).

A helical transmembrane segment spans residues 28–48; the sequence is LTVTKAVGAFIVLFIIIPKVF. N-linked (GlcNAc...) asparagine glycans are attached at residues Asn-225 and Asn-443. Cys-460 is a binding site for heme.

Belongs to the cytochrome P450 family. Heme serves as cofactor.

The protein resides in the membrane. It functions in the pathway mycotoxin biosynthesis. Its function is as follows. Cytochrome P450 monooxygenase; part of the gene cluster that mediates the biosynthesis of the mycotoxin fusarin C. Within the cluster, FUS1, FUS2, FUS8 and FUS9 are sufficient for fusarin production. The roles of the other FUS members are yet undetermined. The fusarin C synthetase FUS1 is responsible for the condensation of one acetyl-coenzyme A (CoA) unit with six malonyl-CoA units and the amide linkage of the arising heptaketide and homoserine, subsequently releasing the first intermediate, prefusarin, as an alcohol with an open ring structure. The cytochrome P450 monooxygenase FUS8 participates in multiple oxidation processes at carbon C-20 and is able to use the FUS1 product as substrate, resulting in formation of 20-hydroxy-prefusarin. This reaction seems to be essential before the 2-pyrrolidone ring closure can be catalyzed by FUS2, generating 20-hydroxy-fusarin. FUS8 is able to further oxidizes carbon C-20 after ring closure, resulting in the formation of carboxy-fusarin C. As the last step, FUS9 methylates the hydroxyl group at C-21 to generate fusarin C. Fusarin C can then rearrange to epi-fusarin C, the (z)-isomers, and fusarin A and fusarin D. In Gibberella moniliformis (strain M3125 / FGSC 7600) (Maize ear and stalk rot fungus), this protein is Cytochrome P450 monooxygenase FUS8.